A 405-amino-acid polypeptide reads, in one-letter code: Tryptophan synthase beta chain (405 aa).

N6-(pyridoxal phosphate)lysine is present on lysine 98.

It belongs to the TrpB family. As to quaternary structure, tetramer of two alpha and two beta chains. The cofactor is pyridoxal 5'-phosphate.

It carries out the reaction (1S,2R)-1-C-(indol-3-yl)glycerol 3-phosphate + L-serine = D-glyceraldehyde 3-phosphate + L-tryptophan + H2O. It participates in amino-acid biosynthesis; L-tryptophan biosynthesis; L-tryptophan from chorismate: step 5/5. Functionally, the beta subunit is responsible for the synthesis of L-tryptophan from indole and L-serine. This Afipia carboxidovorans (strain ATCC 49405 / DSM 1227 / KCTC 32145 / OM5) (Oligotropha carboxidovorans) protein is Tryptophan synthase beta chain.